A 136-amino-acid polypeptide reads, in one-letter code: MGKDTIADLLTSIRNADMNKKGTVRVVSTNITENIVKILLREGFIESVRKHQESNRYFLVLTLRHQRRKTRKGIYRTRTFLKRISRPGLRIYANYQGIPKVLGGMGIAILSTSRGIMTDREARLNRIGGEVLCYIW.

This sequence belongs to the universal ribosomal protein uS8 family. Part of the 30S ribosomal subunit.

Its subcellular location is the plastid. The protein resides in the chloroplast. In terms of biological role, one of the primary rRNA binding proteins, it binds directly to 16S rRNA central domain where it helps coordinate assembly of the platform of the 30S subunit. The protein is Small ribosomal subunit protein uS8c (rps8) of Saccharum hybrid (Sugarcane).